Consider the following 113-residue polypeptide: Large ribosomal subunit protein uL22 (113 aa).

Belongs to the universal ribosomal protein uL22 family. As to quaternary structure, part of the 50S ribosomal subunit.

In terms of biological role, this protein binds specifically to 23S rRNA; its binding is stimulated by other ribosomal proteins, e.g. L4, L17, and L20. It is important during the early stages of 50S assembly. It makes multiple contacts with different domains of the 23S rRNA in the assembled 50S subunit and ribosome. The globular domain of the protein is located near the polypeptide exit tunnel on the outside of the subunit, while an extended beta-hairpin is found that lines the wall of the exit tunnel in the center of the 70S ribosome. The sequence is that of Large ribosomal subunit protein uL22 from Pelotomaculum thermopropionicum (strain DSM 13744 / JCM 10971 / SI).